Consider the following 336-residue polypeptide: tRNA N6-adenosine threonylcarbamoyltransferase (336 aa).

Residues His112 and His116 each contribute to the Fe cation site. Residues 136-140 (LVSGG), Asp169, Gly182, and Asn276 contribute to the substrate site. Residue Asp304 coordinates Fe cation.

This sequence belongs to the KAE1 / TsaD family. The cofactor is Fe(2+).

It is found in the cytoplasm. The enzyme catalyses L-threonylcarbamoyladenylate + adenosine(37) in tRNA = N(6)-L-threonylcarbamoyladenosine(37) in tRNA + AMP + H(+). Required for the formation of a threonylcarbamoyl group on adenosine at position 37 (t(6)A37) in tRNAs that read codons beginning with adenine. Is involved in the transfer of the threonylcarbamoyl moiety of threonylcarbamoyl-AMP (TC-AMP) to the N6 group of A37, together with TsaE and TsaB. TsaD likely plays a direct catalytic role in this reaction. The protein is tRNA N6-adenosine threonylcarbamoyltransferase of Francisella tularensis subsp. holarctica (strain FTNF002-00 / FTA).